Here is a 474-residue protein sequence, read N- to C-terminus: Salutaridinol 7-O-acetyltransferase (474 aa).

Residue H163 is the Proton acceptor of the active site. Residues E213 to E234 are disordered. A compositionally biased stretch (polar residues) spans R214–P230. The Proton acceptor role is filled by D416.

The protein belongs to the plant acyltransferase family. In terms of tissue distribution, expressed in root, stem, leaf and capsule of the mature plant. Restricted to sieve elements of the phloem adjacent or proximal to laticifers.

The catalysed reaction is (7S)-salutaridinol + acetyl-CoA = (7S)-O-acetylsalutaridinol + CoA. Its pathway is alkaloid biosynthesis; morphine biosynthesis. In terms of biological role, acetyltransferase involved in biosynthesis of morphinan-type benzylisoquinoline and opiate alkaloids natural products. Catalyzes the conversion of the phenanthrene alkaloid salutaridinol to salutaridinol-7-O-acetate, the immediate precursor of thebaine along the morphine biosynthetic pathway. Conversion of 7-O-acetylsalutaridinol into thebaine is spontaneous. In Papaver somniferum (Opium poppy), this protein is Salutaridinol 7-O-acetyltransferase.